We begin with the raw amino-acid sequence, 857 residues long: Autoinducer 2 sensor kinase/phosphatase LuxQ (857 aa).

The next 2 membrane-spanning stretches (helical) occupy residues 14–34 (IASF…VSVL) and 283–303 (FWMA…RWWL). A Histidine kinase domain is found at 486 to 706 (KMSHELRTPL…RFEIQLPIEL (221 aa)). Phosphohistidine; by autocatalysis is present on H489. The 116-residue stretch at 731–846 (RVLLVEDNHT…TLHKALEHFK (116 aa)) folds into the Response regulatory domain. 4-aspartylphosphate is present on D780.

In terms of assembly, binds the complex formed by AI-2 and LuxP.

It localises to the cell inner membrane. It carries out the reaction ATP + protein L-histidine = ADP + protein N-phospho-L-histidine.. At low cell density, in absence of AI-2 (autoinducer 2), LuxQ has a kinase activity and autophosphorylates on a histidine residue. The phosphoryl group is then transferred to an aspartate residue in the response regulator domain. The phosphoryl group is transferred to LuxU, and ultimately to LuxO. At high cell density, in the presence of AI-2, the kinase activity is inactivated, and the response regulator domain has a phosphatase activity. This is Autoinducer 2 sensor kinase/phosphatase LuxQ (luxQ) from Vibrio cholerae serotype O1 (strain ATCC 39315 / El Tor Inaba N16961).